The following is a 481-amino-acid chain: Protein hedgehog (481 aa).

C93 carries the N-palmitoyl cysteine lipid modification. Residues E157, E158, D163, T193, E194, D197, and D199 each contribute to the Ca(2+) site. G265 carries the Cholesterol glycine ester lipid modification.

It belongs to the hedgehog family. In terms of assembly, interacts with shf. In terms of processing, the C-terminal part of the hedgehog protein precursor displays an autoproteolysis activity that results in the cleavage of the full-length protein into two parts (N-product and C-product). In addition, the C-terminal part displays a cholesterol transferase activity that results by the covalent attachment of a cholesterol moiety to the C-terminal of the newly generated N-product. The N-product is the active species in both local and long-range signaling, whereas the C-product has no signaling activity. Cholesterylation is required for N-product targeting to lipid rafts and multimerization. Post-translationally, N-palmitoylation by Rasp of the hedgehog N-product, within the secretory pathway, is required for the embryonic and larval patterning activities of the hedgehog signal.

Its subcellular location is the nucleus. It localises to the cytoplasm. It is found in the cell membrane. It catalyses the reaction glycyl-L-cysteinyl-[protein] + cholesterol + H(+) = [protein]-C-terminal glycyl cholesterol ester + N-terminal L-cysteinyl-[protein]. Functionally, the C-terminal part of the hedgehog protein precursor displays an autoproteolysis activity that results in the cleavage of the full-length protein into two parts (N-product and C-product). In addition, the C-terminal part displays a cholesterol transferase activity that results by the covalent attachment of a cholesterol moiety to the C-terminal of the newly generated N-product. Once cleaved, the C-product has no signaling activity and diffuses from the cell. In terms of biological role, the dually lipidated hedgehog protein N-product is a morphogen which is essential for a variety of patterning events during development. Establishes the anterior-posterior axis of the embryonic segments and patterns the larval imaginal disks. Binds to the patched (ptc) receptor, which functions in association with smoothened (smo), to activate the transcription of target genes wingless (wg), decapentaplegic (dpp) and ptc. In the absence of hh, ptc represses the constitutive signaling activity of smo through fused (fu). Essential component of a signaling pathway which regulates the Duox-dependent gut immune response to bacterial uracil; required to activate Cad99C-dependent endosome formation, norpA-dependent Ca2+ mobilization and p38 MAPK, which are essential steps in the Duox-dependent production of reactive oxygen species (ROS) in response to intestinal bacterial infection. During photoreceptor differentiation, it up-regulates transcription of Ubr3, which in turn promotes the hh-signaling pathway by mediating the ubiquitination and degradation of cos. This chain is Protein hedgehog, found in Drosophila persimilis (Fruit fly).